Here is a 1023-residue protein sequence, read N- to C-terminus: MANSQLDRVKGLIDSLNQHTKSAAKSGAGALKNGLGQVKQAGQKLILYIPKDYQASTGSSLNDLVKAAEALGIEVHRSEKNGTALAKELFGTTEKLLGFSERGIALFAPQFDKLLNKNQKLSKSLGGSSEALGQRLNKTQTALSALQSFLGTAIAGMDLDSLLRRRRNGEDVSGSELAKAGVDLAAQLVDNIASATGTVDAFAEQLGKLAMPYLTLALSGLASKLNNLPDLSLAGPGFDAVSGILSVVSASFILSNKDADAGTKAAAGIEISTKILGNIGKAVSQYIIAQRVAAGLSTTAATGGLIGSVVALAISPLSFLNVADKFERAKQLEQYSERFKKFGYEGDSLLASFYRETGAIEAALTTINSVLSAASAGVGAAATGSLVGAPVAALVSAITGIISGILDASKQAIFERVATKLANKIDEWEKKHGKNYFENGYDARHSAFLEDTFELLSQYNKEYSVERVVAITQQRWDVNIGELAGITRKGADAKSGKAYVDFFEEGKLLEKDPDRFDKKVFDPLEGKIDLSSINKTTLLKFITPVFTAGEEIRERKQTGKYEYMTELFVKGKEKWVVTGVESHNAIYDYTNLIQLAIDKKGEKRQVTIESHLGEKNDRIYLSSGSSIVYAGNGHDVAYYDKTDTGYLTFDGQSAQKAGEYIVTKELKADVKVLKEVVKTQDISVGKTCSEKLEYRDYELSPFELGNGIRAKDELHSVEEIIGSNRKDKFFGSRFTDIFHGAKGDDEIYGNDGHDILYGDDGNDVIHGGDGNDHLVGGNGNDRLIGGKGNNFLNGGDGDDELQVFEGQYNVLLGGAGNDILYGSDGTNLFDGGVGNDKIYGGLGKDIYRYSKEYGRHIIIEKGGDDDTLLLSDLSFKDVGFIRIGDDLLVNKRIGGTLYYHEDYNGNALTIKDWFKEGKEGQNNKIEKIVDKDGAYVLSQYLTELTAPGRGINYFNGLEEKLYYGEGYNALPQLRKDIEQIISSTGALTGEHGQVLVGAGGPLAYSNSPNSIPNAFSNYLTQSA.

Helical transmembrane passes span 226-256, 297-326, and 367-406; these read NNLP…ILSN, STTA…ADKF, and INSV…SGIL. Hemolysin-type calcium-binding repeat units follow at residues 730–747, 748–765, 766–783, 784–801, 812–829, and 830–847; these read FGSR…DDEI, YGND…NDVI, HGGD…NDRL, IGGK…DDEL, LGGA…TNLF, and DGGV…KDIY.

It belongs to the RTX prokaryotic toxin (TC 1.C.11) family. In terms of processing, palmitoylated by ApxIC. The toxin only becomes active when modified.

The protein localises to the secreted. It is found in the host cell membrane. One of the virulence factors of A.pleuropneumoniae, which has a strong hemolytic activity and is cytotoxic for alveolar macrophages and neutrophils. This Actinobacillus pleuropneumoniae (Haemophilus pleuropneumoniae) protein is RTX-I toxin determinant A from serotypes 5/10 (apxIA).